The following is a 416-amino-acid chain: MELGLALRLVAPPPLLPCLSRRALSLPPDFVSSRVLRGRRIHASRLKHGAGVVCNAIMTYSGVEEEEMVEEEMEEEAEPAVSTRPRLELIEKPDRSLALLDEYESEELGTSLCANHRSGYVAVLGKPNVGKSTLINQMVGQKLSIVTDKPQTTRHRILGICSEPEYQIILYDTPGVIKKEMHKLDSMMMKNVRSAIGSADCVLVVADACKTPEKIDEMLEEGVGNKDIGLPVLLVLNKKDLIKPGEIAKKLEWYQKFTNVDDVIPISAKFGHGVDDIKEWILSKLPLGPAYYPKDIASEHPERFFVGEIVREKIFVQYRQEIPYSCQVNVVSYKSRPAAKDFIQVEILVEKESQRGIILGKDGKSIKMLATASRLDIEDFLQKKVYLEVEVKVKENWRQDERLLKRYGYGGEIQAL.

A chloroplast-targeting transit peptide spans 1–53 (MELGLALRLVAPPPLLPCLSRRALSLPPDFVSSRVLRGRRIHASRLKHGAGVV). The region spanning 117–287 (RSGYVAVLGK…KEWILSKLPL (171 aa)) is the Era-type G domain. The G1 stretch occupies residues 125-132 (GKPNVGKS). 125–132 (GKPNVGKS) serves as a coordination point for GTP. Residues 151–155 (QTTRH) are G2. Residues 172-175 (DTPG) are G3. GTP-binding positions include 172–176 (DTPGV) and 237–240 (NKKD). The tract at residues 237 to 240 (NKKD) is G4. The segment at 266 to 268 (ISA) is G5. The 78-residue stretch at 318–395 (YRQEIPYSCQ…YLEVEVKVKE (78 aa)) folds into the KH type-2 domain.

The protein belongs to the TRAFAC class TrmE-Era-EngA-EngB-Septin-like GTPase superfamily. Era GTPase family.

It localises to the plastid. The protein localises to the chloroplast stroma. The protein resides in the chloroplast nucleoid. Functionally, nuclear genome-encoded probable GTPase involved in ribosome biogenesis in chloroplasts. Plays a role in 16S rRNA maturation in plastids and may contribute to the assembly of the small (30S) ribosomal subunit. The chain is GTPase ERA1, chloroplastic from Zea mays (Maize).